Here is a 247-residue protein sequence, read N- to C-terminus: Peptidyl-prolyl cis-trans isomerase FKBP17-2, chloroplastic (247 aa).

Residues 1 to 79 (MANLFTATAP…SSLTRRFGIG (79 aa)) constitute a chloroplast transit peptide. The interval 26 to 64 (QCYASSSNPPEPESSSPPPPPPPPQPLASQQKRKKNVET) is disordered. A compositionally biased stretch (pro residues) spans 34–51 (PPEPESSSPPPPPPPPQP). Residues 141-243 (GDLVVIDLKG…EYIVEIDRVS (103 aa)) enclose the PPIase FKBP-type domain.

Belongs to the FKBP-type PPIase family.

The protein resides in the plastid. Its subcellular location is the chloroplast thylakoid lumen. The catalysed reaction is [protein]-peptidylproline (omega=180) = [protein]-peptidylproline (omega=0). Its function is as follows. PPIases accelerate the folding of proteins. It catalyzes the cis-trans isomerization of proline imidic peptide bonds in oligopeptides. In Arabidopsis thaliana (Mouse-ear cress), this protein is Peptidyl-prolyl cis-trans isomerase FKBP17-2, chloroplastic (FKBP17-2).